We begin with the raw amino-acid sequence, 134 residues long: Profilin-2 (134 aa).

Cys-13 and Cys-118 are joined by a disulfide. An Involved in PIP2 interaction motif is present at residues 84-100 (AVIRGKKGSGGITIKKT). Phosphothreonine is present on Thr-114.

It belongs to the profilin family. In terms of processing, phosphorylated by MAP kinases.

It is found in the cytoplasm. Its subcellular location is the cytoskeleton. This is Profilin-2 from Olea europaea (Common olive).